We begin with the raw amino-acid sequence, 86 residues long: U15-lycotoxin-Ls1d (86 aa).

The N-terminal stretch at 1–20 is a signal peptide; it reads MNSKIFAVLLLLAFLSCVLS. In terms of domain architecture, WAP spans 21–66; it reads DQYCPKSSITACKKMNIRNDCCKDDDCTGGSWCCATPCGNFCKYPT. 5 cysteine pairs are disulfide-bonded: C24/C54, C32/C58, C41/C53, C42/C80, and C47/C62.

Belongs to the venom protein 11 family. 01 (wap-1) subfamily. Contains 5 disulfide bonds. As to expression, expressed by the venom gland.

It is found in the secreted. Has antibacterial activity. This is U15-lycotoxin-Ls1d from Lycosa singoriensis (Wolf spider).